A 678-amino-acid polypeptide reads, in one-letter code: Catalase (678 aa).

The span at 1 to 26 (MSNEREMQNKKDQQLESFRVEDEGKK) shows a compositional bias: basic and acidic residues. Positions 1–32 (MSNEREMQNKKDQQLESFRVEDEGKKLTTNQG) are disordered. Active-site residues include His-75 and Asn-148. Position 362 (Tyr-362) interacts with heme.

Belongs to the catalase family. HPII subfamily. Heme is required as a cofactor.

It localises to the cytoplasm. The catalysed reaction is 2 H2O2 = O2 + 2 H2O. Decomposes hydrogen peroxide into water and oxygen; serves to protect cells from the toxic effects of hydrogen peroxide. The chain is Catalase (katE) from Alkalihalophilus pseudofirmus (strain ATCC BAA-2126 / JCM 17055 / OF4) (Bacillus pseudofirmus).